A 219-amino-acid polypeptide reads, in one-letter code: Small ribosomal subunit protein uS2m (219 aa).

Belongs to the universal ribosomal protein uS2 family. In terms of assembly, component of the mitochondrial ribosome small subunit.

The protein resides in the mitochondrion. The polypeptide is Small ribosomal subunit protein uS2m (RPS2) (Arabidopsis thaliana (Mouse-ear cress)).